A 412-amino-acid polypeptide reads, in one-letter code: uncharacterized protein (412 aa).

The next 11 membrane-spanning stretches (helical) occupy residues Leu-17 to Ile-37, Val-54 to Val-74, Met-91 to Leu-111, Gly-112 to Gly-132, Leu-146 to Gly-166, Trp-173 to Met-193, Val-225 to Gly-245, Thr-257 to Gly-277, Leu-299 to Ile-319, Val-346 to Gly-366, and Ala-375 to Ala-395.

The protein belongs to the major facilitator superfamily.

Its subcellular location is the cell membrane. This is an uncharacterized protein from Bacillus subtilis (strain 168).